Reading from the N-terminus, the 172-residue chain is Tail tube protein (172 aa).

Belongs to the P2likevirus major tail tube protein family.

It is found in the virion. Functionally, forms the virus tail tube. The chain is Tail tube protein (FII) from Escherichia phage P2 (Bacteriophage P2).